A 449-amino-acid chain; its full sequence is L-seryl-tRNA(Sec) selenium transferase (449 aa).

Lysine 286 is modified (N6-(pyridoxal phosphate)lysine).

The protein belongs to the SelA family. Pyridoxal 5'-phosphate serves as cofactor.

It is found in the cytoplasm. It carries out the reaction L-seryl-tRNA(Sec) + selenophosphate + H(+) = L-selenocysteinyl-tRNA(Sec) + phosphate. Its pathway is aminoacyl-tRNA biosynthesis; selenocysteinyl-tRNA(Sec) biosynthesis; selenocysteinyl-tRNA(Sec) from L-seryl-tRNA(Sec) (bacterial route): step 1/1. Functionally, converts seryl-tRNA(Sec) to selenocysteinyl-tRNA(Sec) required for selenoprotein biosynthesis. The polypeptide is L-seryl-tRNA(Sec) selenium transferase (Sulfurimonas denitrificans (strain ATCC 33889 / DSM 1251) (Thiomicrospira denitrificans (strain ATCC 33889 / DSM 1251))).